An 854-amino-acid chain; its full sequence is DNA mismatch repair protein MutS (854 aa).

Residue 608–615 (GPNMAGKS) coordinates ATP.

Belongs to the DNA mismatch repair MutS family.

Functionally, this protein is involved in the repair of mismatches in DNA. It is possible that it carries out the mismatch recognition step. This protein has a weak ATPase activity. The polypeptide is DNA mismatch repair protein MutS (Leuconostoc mesenteroides subsp. mesenteroides (strain ATCC 8293 / DSM 20343 / BCRC 11652 / CCM 1803 / JCM 6124 / NCDO 523 / NBRC 100496 / NCIMB 8023 / NCTC 12954 / NRRL B-1118 / 37Y)).